A 469-amino-acid polypeptide reads, in one-letter code: 1-aminocyclopropane-1-carboxylate synthase 8 (469 aa).

Substrate contacts are provided by Glu-47 and Tyr-85. At Lys-272 the chain carries N6-(pyridoxal phosphate)lysine.

The protein belongs to the class-I pyridoxal-phosphate-dependent aminotransferase family. As to quaternary structure, homodimer and heterodimer. In vivo, the relevance of heterodimerization with other ACS enzymes is however unsure. Interacts with GRF3. Requires pyridoxal 5'-phosphate as cofactor. In terms of processing, may be processed at its C-terminus. In terms of tissue distribution, expressed in roots. Expressed at low level in flowers and siliques.

It carries out the reaction S-adenosyl-L-methionine = 1-aminocyclopropane-1-carboxylate + S-methyl-5'-thioadenosine + H(+). It functions in the pathway alkene biosynthesis; ethylene biosynthesis via S-adenosyl-L-methionine; ethylene from S-adenosyl-L-methionine: step 1/2. In terms of biological role, 1-aminocyclopropane-1-carboxylate synthase (ACS) enzymes catalyze the conversion of S-adenosyl-L-methionine (SAM) into 1-aminocyclopropane-1-carboxylate (ACC), a direct precursor of ethylene. This chain is 1-aminocyclopropane-1-carboxylate synthase 8 (ACS8), found in Arabidopsis thaliana (Mouse-ear cress).